Reading from the N-terminus, the 392-residue chain is Probable protein phosphatase 2C 29 (392 aa).

The 310-residue stretch at 44–353 (DYSVAVAQAN…DDITVVVLFL (310 aa)) folds into the PPM-type phosphatase domain. The Mn(2+) site is built by D75, G76, D285, and D344. The tract at residues 360 to 392 (AGRGDEIDGTDGPVDVFSLSPDDREDPTRPVLR) is disordered.

Belongs to the PP2C family. Requires Mg(2+) as cofactor. Mn(2+) is required as a cofactor.

It carries out the reaction O-phospho-L-seryl-[protein] + H2O = L-seryl-[protein] + phosphate. The enzyme catalyses O-phospho-L-threonyl-[protein] + H2O = L-threonyl-[protein] + phosphate. The sequence is that of Probable protein phosphatase 2C 29 from Oryza sativa subsp. japonica (Rice).